The primary structure comprises 105 residues: Large ribosomal subunit protein bL21 (105 aa).

The protein belongs to the bacterial ribosomal protein bL21 family. Part of the 50S ribosomal subunit. Contacts protein L20.

This protein binds to 23S rRNA in the presence of protein L20. The polypeptide is Large ribosomal subunit protein bL21 (Rhizobium johnstonii (strain DSM 114642 / LMG 32736 / 3841) (Rhizobium leguminosarum bv. viciae)).